A 280-amino-acid chain; its full sequence is Dual adapter for phosphotyrosine and 3-phosphotyrosine and 3-phosphoinositide (280 aa).

The interval Met-1 to Trp-20 is disordered. The SH2 domain occupies Trp-35–Tyr-129. Tyr-139 carries the phosphotyrosine modification. Position 141 is a phosphoserine (Ser-141). Positions Leu-164–Ser-259 constitute a PH domain.

Interacts with PtdIns(3,4,5)P3 and PLCG2. In vitro, interacts with PtdIns(3,4)P2. In terms of processing, phosphorylated on tyrosine residues. In terms of tissue distribution, highly expressed in placenta and lung, followed by brain, heart, kidney, liver, pancreas and skeletal muscle. Expressed by B-lymphocytes, but not T-lymphocytes or nonhematopoietic cells.

Its subcellular location is the cytoplasm. The protein localises to the membrane. May act as a B-cell-associated adapter that regulates B-cell antigen receptor (BCR)-signaling downstream of PI3K. The polypeptide is Dual adapter for phosphotyrosine and 3-phosphotyrosine and 3-phosphoinositide (DAPP1) (Homo sapiens (Human)).